Consider the following 40-residue polypeptide: Putative NAD(P)-dependent glyceraldehyde-3-phosphate dehydrogenase PS5 (40 aa).

This chain is Putative NAD(P)-dependent glyceraldehyde-3-phosphate dehydrogenase PS5, found in Pinus strobus (Eastern white pine).